The following is a 129-amino-acid chain: Large ribosomal subunit protein bL17 (129 aa).

This sequence belongs to the bacterial ribosomal protein bL17 family. In terms of assembly, part of the 50S ribosomal subunit. Contacts protein L32.

This is Large ribosomal subunit protein bL17 from Buchnera aphidicola subsp. Baizongia pistaciae (strain Bp).